The primary structure comprises 217 residues: Deoxyribose-phosphate aldolase (217 aa).

The active-site Proton donor/acceptor is the aspartate 89. Lysine 151 serves as the catalytic Schiff-base intermediate with acetaldehyde. Lysine 180 acts as the Proton donor/acceptor in catalysis.

It belongs to the DeoC/FbaB aldolase family. DeoC type 1 subfamily.

It is found in the cytoplasm. The catalysed reaction is 2-deoxy-D-ribose 5-phosphate = D-glyceraldehyde 3-phosphate + acetaldehyde. Its pathway is carbohydrate degradation; 2-deoxy-D-ribose 1-phosphate degradation; D-glyceraldehyde 3-phosphate and acetaldehyde from 2-deoxy-alpha-D-ribose 1-phosphate: step 2/2. In terms of biological role, catalyzes a reversible aldol reaction between acetaldehyde and D-glyceraldehyde 3-phosphate to generate 2-deoxy-D-ribose 5-phosphate. This chain is Deoxyribose-phosphate aldolase, found in Metamycoplasma arthritidis (strain 158L3-1) (Mycoplasma arthritidis).